The chain runs to 329 residues: Peroxidase 56 (329 aa).

The first 31 residues, 1–31 (MAALKMTISCFLFLQVIYCLLSSFAPTNVQG), serve as a signal peptide directing secretion. 4 disulfide bridges follow: cysteine 41–cysteine 119, cysteine 74–cysteine 79, cysteine 125–cysteine 325, and cysteine 204–cysteine 236. Histidine 72 serves as the catalytic Proton acceptor. Ca(2+) contacts are provided by aspartate 73, valine 76, glycine 78, glutamate 80, and serine 82. Asparagine 158 carries an N-linked (GlcNAc...) asparagine glycan. Proline 167 provides a ligand contact to substrate. An N-linked (GlcNAc...) asparagine glycan is attached at asparagine 172. Residue histidine 197 coordinates heme b. Threonine 198 serves as a coordination point for Ca(2+). Asparagine 213 is a glycosylation site (N-linked (GlcNAc...) asparagine). Ca(2+)-binding residues include aspartate 248, serine 251, and aspartate 256.

This sequence belongs to the peroxidase family. Classical plant (class III) peroxidase subfamily. Requires heme b as cofactor. Ca(2+) serves as cofactor.

The protein localises to the secreted. It catalyses the reaction 2 a phenolic donor + H2O2 = 2 a phenolic radical donor + 2 H2O. Its function is as follows. Removal of H(2)O(2), oxidation of toxic reductants, biosynthesis and degradation of lignin, suberization, auxin catabolism, response to environmental stresses such as wounding, pathogen attack and oxidative stress. These functions might be dependent on each isozyme/isoform in each plant tissue. In Arabidopsis thaliana (Mouse-ear cress), this protein is Peroxidase 56 (PER56).